The following is a 373-amino-acid chain: Queuine tRNA-ribosyltransferase accessory subunit 2 (373 aa).

Residues C320, C322, C325, and H351 each coordinate Zn(2+).

This sequence belongs to the queuine tRNA-ribosyltransferase family. QTRT2 subfamily. In terms of assembly, heterodimer of a catalytic subunit and an accessory subunit. Requires Zn(2+) as cofactor.

Its subcellular location is the cytoplasm. In terms of biological role, non-catalytic subunit of the queuine tRNA-ribosyltransferase (TGT) that catalyzes the base-exchange of a guanine (G) residue with queuine (Q) at position 34 (anticodon wobble position) in tRNAs with GU(N) anticodons (tRNA-Asp, -Asn, -His and -Tyr), resulting in the hypermodified nucleoside queuosine (7-(((4,5-cis-dihydroxy-2-cyclopenten-1-yl)amino)methyl)-7-deazaguanosine). The protein is Queuine tRNA-ribosyltransferase accessory subunit 2 of Caenorhabditis elegans.